Consider the following 433-residue polypeptide: ATP-dependent protease ATPase subunit HslU (433 aa).

ATP contacts are provided by residues valine 18, 60–65, aspartate 246, glutamate 311, and arginine 383; that span reads GVGKTE.

The protein belongs to the ClpX chaperone family. HslU subfamily. In terms of assembly, a double ring-shaped homohexamer of HslV is capped on each side by a ring-shaped HslU homohexamer. The assembly of the HslU/HslV complex is dependent on binding of ATP.

The protein resides in the cytoplasm. ATPase subunit of a proteasome-like degradation complex; this subunit has chaperone activity. The binding of ATP and its subsequent hydrolysis by HslU are essential for unfolding of protein substrates subsequently hydrolyzed by HslV. HslU recognizes the N-terminal part of its protein substrates and unfolds these before they are guided to HslV for hydrolysis. This Rhodopseudomonas palustris (strain HaA2) protein is ATP-dependent protease ATPase subunit HslU.